A 173-amino-acid polypeptide reads, in one-letter code: Ribosome maturation factor RimM (173 aa).

Residues 94 to 173 form the PRC barrel domain; the sequence is EGEFYWRDLI…TIEVDWDPGF (80 aa).

This sequence belongs to the RimM family. Binds ribosomal protein uS19.

The protein localises to the cytoplasm. In terms of biological role, an accessory protein needed during the final step in the assembly of 30S ribosomal subunit, possibly for assembly of the head region. Essential for efficient processing of 16S rRNA. May be needed both before and after RbfA during the maturation of 16S rRNA. It has affinity for free ribosomal 30S subunits but not for 70S ribosomes. The protein is Ribosome maturation factor RimM of Aeromonas salmonicida (strain A449).